The following is a 185-amino-acid chain: DNA replication complex GINS protein PSF2 (185 aa).

It belongs to the GINS2/PSF2 family. Component of the GINS complex which is a heterotetramer of gins1/psf1, gins2/psf2, gins3/psf3 and gins4/sld5. Component of the CMG helicase complex, composed of the mcm2-7 complex, the GINS complex and cdc45.

It is found in the nucleus. Its subcellular location is the chromosome. Functionally, required for correct functioning of the GINS complex, a complex that plays an essential role in the initiation of DNA replication, and progression of DNA replication forks. GINS complex is a core component of CDC45-MCM-GINS (CMG) helicase, the molecular machine that unwinds template DNA during replication, and around which the replisome is built. The protein is DNA replication complex GINS protein PSF2 (gins2) of Xenopus laevis (African clawed frog).